A 512-amino-acid polypeptide reads, in one-letter code: GMP synthase [glutamine-hydrolyzing] (512 aa).

One can recognise a Glutamine amidotransferase type-1 domain in the interval 5-195 (GIVILDFGSQ…IFGIAKAEKN (191 aa)). C82 (nucleophile) is an active-site residue. Catalysis depends on residues H169 and E171. One can recognise a GMPS ATP-PPase domain in the interval 196 to 387 (WSMENYIEST…LGIPDYMVDR (192 aa)). ATP is bound at residue 223-229 (SGGVDSS).

As to quaternary structure, homodimer.

The catalysed reaction is XMP + L-glutamine + ATP + H2O = GMP + L-glutamate + AMP + diphosphate + 2 H(+). The protein operates within purine metabolism; GMP biosynthesis; GMP from XMP (L-Gln route): step 1/1. Catalyzes the synthesis of GMP from XMP. In Fusobacterium nucleatum subsp. nucleatum (strain ATCC 25586 / DSM 15643 / BCRC 10681 / CIP 101130 / JCM 8532 / KCTC 2640 / LMG 13131 / VPI 4355), this protein is GMP synthase [glutamine-hydrolyzing].